The sequence spans 195 residues: Cytochrome c oxidase subunit 1 (195 aa).

Residues 12–32 (MYWVLGFIFLFTLGGLTGIVL) traverse the membrane as a helical segment. The Mg(2+) site is built by His42 and Asp43. Heme a3 is bound at residue His50. His52 contacts Fe(II)-heme a. A run of 3 helical transmembrane segments spans residues 59-79 (AVFA…GLVL), 88-108 (FIVM…LGLA), and 131-151 (GSLM…EAFL).

Belongs to the heme-copper respiratory oxidase family. Component of the cytochrome c oxidase (complex IV, CIV), a multisubunit enzyme composed of a catalytic core of 3 subunits and several supernumerary subunits. The complex exists as a monomer or a dimer and forms supercomplexes (SCs) in the inner mitochondrial membrane with ubiquinol-cytochrome c oxidoreductase (cytochrome b-c1 complex, complex III, CIII). Requires heme as cofactor. It depends on Cu cation as a cofactor.

The protein resides in the mitochondrion inner membrane. The enzyme catalyses 4 Fe(II)-[cytochrome c] + O2 + 8 H(+)(in) = 4 Fe(III)-[cytochrome c] + 2 H2O + 4 H(+)(out). It participates in energy metabolism; oxidative phosphorylation. In terms of biological role, component of the cytochrome c oxidase, the last enzyme in the mitochondrial electron transport chain which drives oxidative phosphorylation. The respiratory chain contains 3 multisubunit complexes succinate dehydrogenase (complex II, CII), ubiquinol-cytochrome c oxidoreductase (cytochrome b-c1 complex, complex III, CIII) and cytochrome c oxidase (complex IV, CIV), that cooperate to transfer electrons derived from NADH and succinate to molecular oxygen, creating an electrochemical gradient over the inner membrane that drives transmembrane transport and the ATP synthase. Cytochrome c oxidase is the component of the respiratory chain that catalyzes the reduction of oxygen to water. Electrons originating from reduced cytochrome c in the intermembrane space (IMS) are transferred via the dinuclear copper A center (CU(A)) of subunit 2 and heme A of subunit 1 to the active site in subunit 1, a binuclear center (BNC) formed by heme A3 and copper B (CU(B)). The BNC reduces molecular oxygen to 2 water molecules using 4 electrons from cytochrome c in the IMS and 4 protons from the mitochondrial matrix. This Albinaria turrita (Door snail) protein is Cytochrome c oxidase subunit 1 (COI).